Here is a 535-residue protein sequence, read N- to C-terminus: MMDDDTELRTDGNSLLKAVWLGRLRLTRLLLEGGAYINESNDKGETALMVACITKHVDQQSISKSKMVKYLLDNRADPNIQDKSGKTALIHACIRRAGGEVVSLLLENGADPSLEDRTGASALVYAINADDKDALKHLLDACKAKGKEVIIITTDKSSSGTKTTKQYLNVPPSPKVEDRHSPPLCASPSDIELKALGLDSPLTEKEDDFFSLQAGHPSSCNTSKAVNEPGSPTRKVSNLKRARLPQLKRLQSEPWGLIAPSVLAASTRQDETHGASTDNEVIKSISDISFPKRGPLSRTNSIDSKDPTLFHTVTEQVLKIPVSSAPASWKAAYEKGQAPHPRLARRGTLPVDQEKCGMGPSGPSALKEPASLKWLENDLYDLDIQPGPDPPNSISLESGKGPLDRKKLNSSHLSLFHGSRESLDTVPSTSPSSARRRPPHLLERRGSGTLLLDRISHTRPGFLPPLNVNLNPPIPDIRSSSKPSCSLASGLKSMVPVAPSSPKRVDLRSKKKLLRRHSMQIEQMKQLSDFEEIMT.

ANK repeat units lie at residues 10–39 (TDGNSLLKAVWLGRLRLTRLLLEGGAYINE), 43–80 (KGETALMVACITKHVDQQSISKSKMVKYLLDNRADPNI), 84–114 (SGKTALIHACIRRAGGEVVSLLLENGADPSL), and 118–147 (TGASALVYAINADDKDALKHLLDACKAKGK). Disordered stretches follow at residues 159–181 (SGTKTTKQYLNVPPSPKVEDRHS) and 214–237 (AGHPSSCNTSKAVNEPGSPTRKVS). Positions 216 to 225 (HPSSCNTSKA) are enriched in polar residues. Phosphoserine is present on Ser-301. The tract at residues 381–444 (DLDIQPGPDP…RRRPPHLLER (64 aa)) is disordered. Residue Ser-447 is modified to Phosphoserine.

Belongs to the ANKRD34 family.

This Homo sapiens (Human) protein is Ankyrin repeat domain-containing protein 34C (ANKRD34C).